We begin with the raw amino-acid sequence, 190 residues long: MTGILAVQGAFAEHAAVLDKLGAPWKLLRAAEDFDESIDRVILPGGESTTQGKLLHSTGLFEPIAAHIKAGKPVFGTCAGMILLAKKLDNDDNVYFGALDAVVRRNAYGRQLGSFQATADFGAADDPQRITDFPLVFIRGPYVVSVGPEATVETEVDGHVVGLRQGNILATAFHPELTDDTRIHELFLSL.

46 to 48 (GES) lines the L-glutamine pocket. The Nucleophile role is filled by cysteine 78. L-glutamine-binding positions include arginine 105 and 138-139 (IR). Residues histidine 174 and glutamate 176 each act as charge relay system in the active site.

The protein belongs to the glutaminase PdxT/SNO family. In terms of assembly, in the presence of PdxS, forms a dodecamer of heterodimers. Only shows activity in the heterodimer.

The enzyme catalyses aldehydo-D-ribose 5-phosphate + D-glyceraldehyde 3-phosphate + L-glutamine = pyridoxal 5'-phosphate + L-glutamate + phosphate + 3 H2O + H(+). It carries out the reaction L-glutamine + H2O = L-glutamate + NH4(+). It functions in the pathway cofactor biosynthesis; pyridoxal 5'-phosphate biosynthesis. Catalyzes the hydrolysis of glutamine to glutamate and ammonia as part of the biosynthesis of pyridoxal 5'-phosphate. The resulting ammonia molecule is channeled to the active site of PdxS. This Bifidobacterium longum (strain NCC 2705) protein is Pyridoxal 5'-phosphate synthase subunit PdxT.